We begin with the raw amino-acid sequence, 404 residues long: MFKGKVVVAQGGGPTAVINQSMVGAVLESRKFRNVELVYGAVHGVRGIVDEHFLDLTQETTHNLEMVAETPSSALGSTREKPDLKYCQEIFKVLKAHEIGYFFYIGGNDSSDTVRIVSEEAAKADYGLRCIHIPKTIDNDLVVNDHTPGFPSAARFVAQAFSGVNLDNQALPGVYIGVVMGRHAGFLTAASALGKKFQDDGPHLIYLPERTFDVDTFVSDVKEVYDRTGRCIVAVSEGIHDASGEPIITKLAEEVERDAHGNVQLSGTGALADLLVSVVKKKSGIKRVRGDTLGYLQRSFVGCVSDVDQREAREVGEKAVQYAMWGQTNGSVTIHRTGFYSVDYQLTPLLDVAGKTRTMPDSFIAANGHDVTTDFLMYLRPLLGRGMPDAYRLRDNRVAKVLNR.

Residue Gly13 coordinates diphosphate. Asn108 contributes to the Mg(2+) binding site. Residues 136–138, 180–182, Glu237, and 295–298 contribute to the substrate site; these read TID, MGR, and YLQR. Asp138 serves as the catalytic Proton acceptor.

This sequence belongs to the phosphofructokinase type A (PFKA) family. PPi-dependent PFK group II subfamily. Clade 'B2' sub-subfamily. As to quaternary structure, homodimer. Requires Mg(2+) as cofactor.

It is found in the cytoplasm. It catalyses the reaction beta-D-fructose 6-phosphate + diphosphate = beta-D-fructose 1,6-bisphosphate + phosphate + H(+). The protein operates within carbohydrate degradation; glycolysis; D-glyceraldehyde 3-phosphate and glycerone phosphate from D-glucose: step 3/4. Its activity is regulated as follows. Non-allosteric. Functionally, catalyzes the phosphorylation of D-fructose 6-phosphate, the first committing step of glycolysis. Uses inorganic phosphate (PPi) as phosphoryl donor instead of ATP like common ATP-dependent phosphofructokinases (ATP-PFKs), which renders the reaction reversible, and can thus function both in glycolysis and gluconeogenesis. Consistently, PPi-PFK can replace the enzymes of both the forward (ATP-PFK) and reverse (fructose-bisphosphatase (FBPase)) reactions. The sequence is that of Pyrophosphate--fructose 6-phosphate 1-phosphotransferase from Rhodospirillum rubrum (strain ATCC 11170 / ATH 1.1.1 / DSM 467 / LMG 4362 / NCIMB 8255 / S1).